A 122-amino-acid chain; its full sequence is MIQQESRLKVADNTGAKEILCIRVLGGSGRRYAGIGDVIVATVKDAIPGGNVKKGDVVKAVVVRTVKERRRPDGSYIRFDENAAVILKNDGEPRGTRIFGPVGRELREKKFMKIISLAPEVL.

This sequence belongs to the universal ribosomal protein uL14 family. In terms of assembly, part of the 50S ribosomal subunit. Forms a cluster with proteins L3 and L19. In the 70S ribosome, L14 and L19 interact and together make contacts with the 16S rRNA in bridges B5 and B8.

Its function is as follows. Binds to 23S rRNA. Forms part of two intersubunit bridges in the 70S ribosome. The protein is Large ribosomal subunit protein uL14 of Nocardioides sp. (strain ATCC BAA-499 / JS614).